A 101-amino-acid chain; its full sequence is Helix-loop-helix protein 17 (101 aa).

A basic motif region spans residues 14–27; sequence GVRLSINLRERCRM. The bHLH domain maps to 14-68; that stretch reads GVRLSINLRERCRMHDLNEALDDLRAVIPYAHGGSVRKLSKIATLLLAKNHIIMQ. Residues 28-68 are helix-loop-helix motif; the sequence is HDLNEALDDLRAVIPYAHGGSVRKLSKIATLLLAKNHIIMQ.

As to expression, expressed in neuronal tissues of the head, including sheath cells of the cephalic sensilla (CEPsh) glia.

It is found in the nucleus. Functionally, probable transcription factor that regulates the expression of dopamine receptors dop-1, dop-2 and dop-3 and thus dopamine-dependent behaviors. May act redundantly with hlh-31 and hlh-32 to regulate ventral CEPsh glia functions. May play a role in chemotactic responses in larvae. The protein is Helix-loop-helix protein 17 of Caenorhabditis elegans.